The chain runs to 288 residues: Prohibitin-2 (288 aa).

A helical; Signal-anchor for type II membrane protein transmembrane segment spans residues Gly-21 to Thr-43. The AIM signature appears at Tyr-125–Leu-128.

The protein belongs to the prohibitin family. The mitochondrial prohibitin complex consists of two subunits (phb1 and phb2). The subunits assemble into a membrane-associated ring-shaped supercomplex of approximately 1 mDa.

Its subcellular location is the mitochondrion inner membrane. Its function is as follows. Prohibitin probably acts as a holdase/unfoldase for the stabilization of newly synthesized mitochondrial proteins. Involved in mitophagy; may act as an adapter for atg8 that supports mitophagosome assembly. Negatively regulates the proteolytic processing of atg32 via the i-AAA protease. Acts as a negative regulator of the m-AAA protease. This Schizosaccharomyces pombe (strain 972 / ATCC 24843) (Fission yeast) protein is Prohibitin-2 (phb2).